The primary structure comprises 391 residues: ATPase GET3C (391 aa).

The transit peptide at 1-50 (MAALLLLNRVSRSTSSISLHRVAGTLGFNSFNAQIHGDRISGTLFRVRSL) directs the protein to the mitochondrion. An ATP-binding site is contributed by 77–84 (KGGVGKTS). Asp-106 is a catalytic residue. Asn-328 serves as a coordination point for ATP.

It belongs to the arsA ATPase family.

Its subcellular location is the mitochondrion matrix. The catalysed reaction is ATP + H2O = ADP + phosphate + H(+). The protein is ATPase GET3C of Arabidopsis thaliana (Mouse-ear cress).